The primary structure comprises 1055 residues: Putative helicase/primase complex protein (1055 aa).

The protein belongs to the asfivirus F1055L family.

In terms of biological role, may be involved in DNA replication. The sequence is that of Putative helicase/primase complex protein from Ornithodoros (relapsing fever ticks).